A 552-amino-acid polypeptide reads, in one-letter code: Probable malate:quinone oxidoreductase (552 aa).

The segment at 530–552 is disordered; that stretch reads DAKPATPEAKPAQASSPQHDMAL. Residues 542 to 552 are compositionally biased toward polar residues; sequence QASSPQHDMAL.

It belongs to the MQO family. Requires FAD as cofactor.

It carries out the reaction (S)-malate + a quinone = a quinol + oxaloacetate. It functions in the pathway carbohydrate metabolism; tricarboxylic acid cycle; oxaloacetate from (S)-malate (quinone route): step 1/1. This is Probable malate:quinone oxidoreductase from Cronobacter sakazakii (strain ATCC BAA-894) (Enterobacter sakazakii).